The following is a 1174-amino-acid chain: Pecanex-like protein 4 (1174 aa).

14 consecutive transmembrane segments (helical) span residues 40–60 (IYVNQIVLFLMPWALGGTGTL), 72–92 (AAALSGGLMVFTAAVIQLISV), 140–160 (TVFHSVLAGLVCGLGTWYLLP), 173–193 (TAVLFVFGWITLCIGEYSLIV), 217–237 (LYIFFFVSVDLAHRFIVNIPA), 244–264 (ILHILFVLLPFLWALGTLPPP), 284–304 (SMSTHLRLLVMFIVSAGAAVV), 307–327 (FIPSTVGVVLFMTGLGFLLSL), 366–386 (FLFIAVLGMALLEAGLLHHYV), 394–414 (SGAQAVVGYVLMVLLSIVWIL), 451–471 (IGAVRWILLTLVSPLAMVAFL), 543–563 (LIQFITKLQFAVTVLLALWTE), 580–600 (VFAPFVLGIIVLSTLLSSPLL), and 643–663 (LTAALQTAMAAGSLGLLLPGS). The segment covering 785–797 (PSTQENKTENTGE) has biased composition (polar residues). The interval 785–875 (PSTQENKTEN…DDHSAGTGPK (91 aa)) is disordered. The N-linked (GlcNAc...) asparagine glycan is linked to N790. Positions 798–810 (ASPALPPAANSSP) are enriched in low complexity. Over residues 835–846 (PAIKNRKEKLQS) the composition is skewed to basic and acidic residues. N-linked (GlcNAc...) asparagine glycosylation is found at N1122 and N1149.

It belongs to the pecanex family.

It localises to the membrane. This chain is Pecanex-like protein 4, found in Mus musculus (Mouse).